Here is a 734-residue protein sequence, read N- to C-terminus: Phosphoribosylformylglycinamidine synthase subunit PurL (734 aa).

His-49 is an active-site residue. Positions 52 and 91 each coordinate ATP. Mg(2+) is bound at residue Glu-93. Substrate is bound by residues 94–97 (SHNH) and Arg-116. Residue His-95 is the Proton acceptor of the active site. A Mg(2+)-binding site is contributed by Asp-117. Gln-240 is a substrate binding site. Asp-268 is a binding site for Mg(2+). 312–314 (ESQ) is a substrate binding site. ATP-binding residues include Asp-491 and Gly-528. A Mg(2+)-binding site is contributed by Asn-529. Ser-531 is a substrate binding site.

The protein belongs to the FGAMS family. As to quaternary structure, monomer. Part of the FGAM synthase complex composed of 1 PurL, 1 PurQ and 2 PurS subunits.

It is found in the cytoplasm. The enzyme catalyses N(2)-formyl-N(1)-(5-phospho-beta-D-ribosyl)glycinamide + L-glutamine + ATP + H2O = 2-formamido-N(1)-(5-O-phospho-beta-D-ribosyl)acetamidine + L-glutamate + ADP + phosphate + H(+). The protein operates within purine metabolism; IMP biosynthesis via de novo pathway; 5-amino-1-(5-phospho-D-ribosyl)imidazole from N(2)-formyl-N(1)-(5-phospho-D-ribosyl)glycinamide: step 1/2. In terms of biological role, part of the phosphoribosylformylglycinamidine synthase complex involved in the purines biosynthetic pathway. Catalyzes the ATP-dependent conversion of formylglycinamide ribonucleotide (FGAR) and glutamine to yield formylglycinamidine ribonucleotide (FGAM) and glutamate. The FGAM synthase complex is composed of three subunits. PurQ produces an ammonia molecule by converting glutamine to glutamate. PurL transfers the ammonia molecule to FGAR to form FGAM in an ATP-dependent manner. PurS interacts with PurQ and PurL and is thought to assist in the transfer of the ammonia molecule from PurQ to PurL. This chain is Phosphoribosylformylglycinamidine synthase subunit PurL, found in Zymomonas mobilis subsp. mobilis (strain ATCC 31821 / ZM4 / CP4).